Here is a 1029-residue protein sequence, read N- to C-terminus: Toll-like receptor 9 (1029 aa).

Positions 1–24 (MGPYCAPHPLSLLVQAAALAAALA) are cleaved as a signal peptide. Topologically, residues 25–815 (EGTLPAFLPC…LCLDETLSLD (791 aa)) are extracellular. A disulfide bridge links Cys34 with Cys44. Residue 46 to 50 (WLFLK) coordinates DNA. LRR repeat units follow at residues 61 to 84 (RANV…DFVH), 86 to 109 (SNLR…HFPC), 121 to 146 (VPTL…SLVS), 149 to 165 (LSHT…FTGL), 166 to 189 (HALR…ALEV), 197 to 220 (LGNL…LPPS), 222 to 241 (DTLL…DLAN), 242 to 267 (LTAL…CREC), 282 to 305 (LSRL…WFRG), 307 to 331 (GRLQ…IFND), 332 to 355 (LTQL…HLHL), 362 to 385 (LVSL…TLQS), 389 to 412 (LPKL…IFGA), 414 to 439 (PSLL…LGEV), 469 to 492 (CNLN…MFTR), 494 to 517 (SRLQ…QFVP), 518 to 541 (LTSL…SFTE), 543 to 570 (PQLE…SFVA), 572 to 596 (LPSL…LSSA), 598 to 620 (LRAL…LYLC), 625 to 648 (LRNL…HLDN), 650 to 673 (PKSL…SLTV), 674 to 697 (LPRL…SLPP), 699 to 721 (IRLQ…FFVR), 722 to 745 (ATRL…WFGS), and 747 to 770 (AGTL…AFVD). Asn63 carries N-linked (GlcNAc...) asparagine glycosylation. Residues 71-76 (SNRIHH) and 94-108 (KWNC…MHFP) contribute to the DNA site. An intrachain disulfide couples Cys97 to Cys109. Asn128 is a glycosylation site (N-linked (GlcNAc...) asparagine). Tyr131 contributes to the DNA binding site. Cysteines 177 and 183 form a disulfide. 178–180 (YYM) serves as a coordination point for DNA. N-linked (GlcNAc...) asparagine glycosylation occurs at Asn199. Tyr207 is a binding site for DNA. Asn209 and Asn241 each carry an N-linked (GlcNAc...) asparagine glycan. Disulfide bonds link Cys254–Cys267 and Cys257–Cys264. Cys257 carries the S-palmitoyl cysteine lipid modification. A DNA-binding site is contributed by Arg261. Cys264 carries the S-palmitoyl cysteine lipid modification. 2 N-linked (GlcNAc...) asparagine glycosylation sites follow: Asn339 and Asn380. A disulfide bridge links Cys469 with Cys498. Residues Asn472 and Asn511 are each glycosylated (N-linked (GlcNAc...) asparagine). N-linked (GlcNAc...) asparagine glycosylation occurs at Asn565. Residues Asn667 and Asn692 are each glycosylated (N-linked (GlcNAc...) asparagine). The N-linked (GlcNAc...) asparagine glycan is linked to Asn729. Disulfide bonds link Cys762/Cys788 and Cys764/Cys807. Residues 816 to 836 (CFGLSLLMVALGLAVPMLHHL) traverse the membrane as a helical segment. Topologically, residues 837–1029 (CGWDLWYCFH…NFCRGPTTAE (193 aa)) are cytoplasmic. Residues 864–1009 (LLYDAVVVFD…SFWANLGIAL (146 aa)) enclose the TIR domain.

It belongs to the Toll-like receptor family. Monomer and homodimer. Exists as a monomer in the absence of unmethylated cytidine-phosphate-guanosine (CpG) ligand. Proteolytic processing of an insertion loop (Z-loop) is required for homodimerization upon binding to the unmethylated CpG ligand leading to its activation. Interacts with MYD88 via their respective TIR domains. Interacts with BTK. Interacts (via transmembrane domain) with UNC93B1. Interacts with CD300LH; the interaction may promote full activation of TLR9-triggered innate responses. Interacts with CNPY3 and HSP90B1; this interaction is required for proper folding in the endoplasmic reticulum. Interacts with SMPDL3B. Interacts with CD82; this interaction is essential for TLR9-dependent myddosome formation in response to CpG stimulation. Post-translationally, activated by proteolytic cleavage of the flexible loop between repeats LRR14 and LRR15 within the ectodomain. Cleavage requires UNC93B1. Proteolytically processed by first removing the majority of the ectodomain by either asparagine endopeptidase (AEP) or a cathepsin followed by a trimming event that is solely cathepsin mediated and required for optimal receptor signaling. Palmitoylated by ZDHHC3 in the Golgi regulates TLR9 trafficking from the Golgi to endosomes. Depalmitoylation by PPT1 controls the release of TLR9 from UNC93B1 in endosomes.

Its subcellular location is the endoplasmic reticulum membrane. It localises to the endosome. It is found in the lysosome. The protein localises to the cytoplasmic vesicle. The protein resides in the phagosome. In terms of biological role, key component of innate and adaptive immunity. TLRs (Toll-like receptors) control host immune response against pathogens through recognition of molecular patterns specific to microorganisms. TLR9 is a nucleotide-sensing TLR which is activated by unmethylated cytidine-phosphate-guanosine (CpG) dinucleotides. Acts via MYD88 and TRAF6, leading to NF-kappa-B activation, cytokine secretion and the inflammatory response. Upon CpG stimulation, induces B-cell proliferation, activation, survival and antibody production. This Bos taurus (Bovine) protein is Toll-like receptor 9 (TLR9).